Consider the following 229-residue polypeptide: Zinc finger matrin-type protein 4 (229 aa).

4 consecutive Matrin-type zinc fingers follow at residues 14 to 44, 72 to 106, 145 to 175, and 198 to 228; these read SYCK…KVRL, DKNK…LKLL, RYCG…NAAR, and YRCT…NLKN.

It localises to the nucleus. The protein is Zinc finger matrin-type protein 4 (Zmat4) of Mus musculus (Mouse).